Here is a 598-residue protein sequence, read N- to C-terminus: NADH-quinone oxidoreductase subunit C/D (598 aa).

The NADH dehydrogenase I subunit C stretch occupies residues 1-189; sequence MTDLTTSDSL…DPYVLTKQKE (189 aa). Residues 213-598 are NADH dehydrogenase I subunit D; it reads DFMFLNLGPN…IDFVMSDVDR (386 aa).

This sequence in the N-terminal section; belongs to the complex I 30 kDa subunit family. The protein in the C-terminal section; belongs to the complex I 49 kDa subunit family. NDH-1 is composed of 13 different subunits. Subunits NuoB, CD, E, F, and G constitute the peripheral sector of the complex.

It is found in the cell inner membrane. It carries out the reaction a quinone + NADH + 5 H(+)(in) = a quinol + NAD(+) + 4 H(+)(out). NDH-1 shuttles electrons from NADH, via FMN and iron-sulfur (Fe-S) centers, to quinones in the respiratory chain. The immediate electron acceptor for the enzyme in this species is believed to be ubiquinone. Couples the redox reaction to proton translocation (for every two electrons transferred, four hydrogen ions are translocated across the cytoplasmic membrane), and thus conserves the redox energy in a proton gradient. This Yersinia pseudotuberculosis serotype O:1b (strain IP 31758) protein is NADH-quinone oxidoreductase subunit C/D.